The chain runs to 181 residues: dTDP-4-dehydrorhamnose 3,5-epimerase (181 aa).

Substrate-binding positions include Arg-23, Glu-28, 47–49 (QDN), and Arg-59. His-62 acts as the Proton acceptor in catalysis. The substrate site is built by Lys-71 and His-118. The Proton donor role is filled by Tyr-131. The substrate site is built by Glu-142 and Lys-167.

This sequence belongs to the dTDP-4-dehydrorhamnose 3,5-epimerase family. As to quaternary structure, homodimer.

It catalyses the reaction dTDP-4-dehydro-6-deoxy-alpha-D-glucose = dTDP-4-dehydro-beta-L-rhamnose. It participates in carbohydrate biosynthesis; dTDP-L-rhamnose biosynthesis. It functions in the pathway bacterial outer membrane biogenesis; lipopolysaccharide biosynthesis. Catalyzes the epimerization of the C3' and C5'positions of dTDP-6-deoxy-D-xylo-4-hexulose, forming dTDP-6-deoxy-L-lyxo-4-hexulose. The protein is dTDP-4-dehydrorhamnose 3,5-epimerase (rmlC) of Pseudomonas aeruginosa (strain ATCC 15692 / DSM 22644 / CIP 104116 / JCM 14847 / LMG 12228 / 1C / PRS 101 / PAO1).